Reading from the N-terminus, the 2096-residue chain is Tudor domain-containing protein 6 (2096 aa).

The 56-residue stretch at 65-120 folds into the Tudor 1 domain; sequence ASASPGELCLVQVGLLWHRCRVVSRQAQESRVFLLDEGRTITAGAGSLAPGRREFF. Residues 287–316 are disordered; sequence YRGSTGTGDENSTSATWEEREESPDKPGSP. Residues 288–302 show a composition bias toward polar residues; that stretch reads RGSTGTGDENSTSAT. Position 293 is a phosphothreonine (T293). Tudor domains follow at residues 310–369, 536–593, 816–875, 1033–1088, 1352–1411, and 1567–1626; these read PDKP…YFRM, KPEP…FRQL, HQRN…FLKV, PLNP…AYDV, PLQR…NAIL, and CPYI…ELLS. Phosphoserine occurs at positions 1722 and 2062. The Tudor 8 domain maps to 2026 to 2084; that stretch reads AFTVGSKCVVWSSLRNTWSKCEILETAEEGTRVLNLSNGMEEIVNPENVWNGIPKLDKS.

In terms of assembly, found in a mRNP complex (i.e. messenger ribonucleoproteins which correspond to mRNA with bound proteins), at least composed of TDRD1, TDRD6, TDRD7 and DDX4. Found in a complex, at least composed of PIWIL1, PIWIL2, DDX4 and TDRD6. Interacts with Tex19.1 and probably Tex19.2. Interacts with PRMT5. Interacts with SNRPB (when methylated); to trigger spliceosome formation. Post-translationally, undergoes proteolytic cleavage near the C-terminal by an unknown protease during the transition from meiosis I to meiosis II in primary spermatocytes.

The protein localises to the cytoplasm. Tudor domain-containing protein involved in germ cell development, more specifically the formation of chromatoid body (during spermiogenesis), Balbiani body (during oogenesis), germ plasm (upon fertilization), and for proper miRNA expression and spliceosome maturation. Essential for RNA-dependent helicase UPF1 localization to chromatoid body, for UPF1-UPF2 and UPF1-DDX4 interactions which are required for mRNA degradation, using the extended 3' UTR-triggered nonsense-mediated mRNA decay (NMD) pathway. Involved in spliceosome maturation and mRNA splicing in prophase I spermatocytes through interaction with arginine N-methyltransferase PRMT5 and symmetrically arginine dimethylated SNRPB (small nuclear ribonucleoprotein-associated protein). The protein is Tudor domain-containing protein 6 of Homo sapiens (Human).